We begin with the raw amino-acid sequence, 675 residues long: Methionine--tRNA ligase (675 aa).

A 'HIGH' region motif is present at residues 15–25 (PYANGSIHLGH). The Zn(2+) site is built by Cys-146, Cys-149, Cys-159, and Cys-162. Positions 332 to 336 (KMSKS) match the 'KMSKS' region motif. Lys-335 contributes to the ATP binding site. Positions 573 to 675 (DFAKVDMRIA…SGAQPGMQVK (103 aa)) constitute a tRNA-binding domain.

It belongs to the class-I aminoacyl-tRNA synthetase family. MetG type 1 subfamily. In terms of assembly, homodimer. The cofactor is Zn(2+).

Its subcellular location is the cytoplasm. It catalyses the reaction tRNA(Met) + L-methionine + ATP = L-methionyl-tRNA(Met) + AMP + diphosphate. In terms of biological role, is required not only for elongation of protein synthesis but also for the initiation of all mRNA translation through initiator tRNA(fMet) aminoacylation. The protein is Methionine--tRNA ligase of Yersinia pestis bv. Antiqua (strain Angola).